The following is a 604-amino-acid chain: Replication protein A 70 kDa DNA-binding subunit B (604 aa).

Positions 170-256 form a DNA-binding region, OB; the sequence is WTIKVRVTNK…QNDYEMTLNE (87 aa). The C4-type zinc-finger motif lies at 468 to 488; that stretch reads CKTCNKKVTEAMDSGYWCESC.

It belongs to the replication factor A protein 1 family. Heterotrimer of RPA1, RPA2 and RPA3 (canonical replication protein A complex).

The protein localises to the nucleus. Functionally, component of the replication protein A complex (RPA) required for DNA recombination, repair and replication. The activity of RPA is mediated by single-stranded DNA binding and protein interactions. Probably involved in repair of double-strand DNA breaks (DSBs) induced by genotoxic stresses. This chain is Replication protein A 70 kDa DNA-binding subunit B (RPA1B), found in Arabidopsis thaliana (Mouse-ear cress).